The sequence spans 303 residues: Small ribosomal subunit protein bS1m (303 aa).

S2 carries the post-translational modification N-acetylserine. The transit peptide at 2-13 (SFAQILRGSRAM) directs the protein to the mitochondrion; not cleaved.

It belongs to the bacterial ribosomal protein bS1 family. In terms of assembly, component of the mitochondrial small ribosomal subunit (mt-SSU). Mature yeast 74S mitochondrial ribosomes consist of a small (37S) and a large (54S) subunit. The 37S small subunit contains a 15S ribosomal RNA (15S mt-rRNA) and at least 32 different proteins. The 54S large subunit contains a 21S rRNA (21S mt-rRNA) and at least 45 different proteins. This subunit is mutually exclusive with mug178/small ribosomal subunit protein L51-b.

It localises to the mitochondrion. Component of the mitochondrial ribosome (mitoribosome), a dedicated translation machinery responsible for the synthesis of mitochondrial genome-encoded proteins, including at least some of the essential transmembrane subunits of the mitochondrial respiratory chain. The mitoribosomes are attached to the mitochondrial inner membrane and translation products are cotranslationally integrated into the membrane. bS1m functionally interacts with the 5'-UTR of mitochondrial mRNAs. Plays an essential role in mitochondrial translation. This is Small ribosomal subunit protein bS1m (mrp51) from Schizosaccharomyces pombe (strain 972 / ATCC 24843) (Fission yeast).